A 308-amino-acid chain; its full sequence is tRNA uridine(34) hydroxylase (308 aa).

The region spanning 129 to 223 (QEKDTLILDA…YGKHPETQGA (95 aa)) is the Rhodanese domain. Cys183 serves as the catalytic Cysteine persulfide intermediate.

The protein belongs to the TrhO family.

The enzyme catalyses uridine(34) in tRNA + AH2 + O2 = 5-hydroxyuridine(34) in tRNA + A + H2O. In terms of biological role, catalyzes oxygen-dependent 5-hydroxyuridine (ho5U) modification at position 34 in tRNAs. This Onion yellows phytoplasma (strain OY-M) protein is tRNA uridine(34) hydroxylase.